We begin with the raw amino-acid sequence, 356 residues long: GDSL esterase/lipase At2g36325 (356 aa).

The first 26 residues, 1-26, serve as a signal peptide directing secretion; that stretch reads MNITKLTPWFLFSCLILLSDYIKVNS. Asn25 carries N-linked (GlcNAc...) asparagine glycosylation. The Nucleophile role is filled by Ser54. Residues Asn165, Asn185, and Asn240 are each glycosylated (N-linked (GlcNAc...) asparagine). Catalysis depends on residues Asp334 and His337.

This sequence belongs to the 'GDSL' lipolytic enzyme family.

It localises to the secreted. This Arabidopsis thaliana (Mouse-ear cress) protein is GDSL esterase/lipase At2g36325.